Here is a 315-residue protein sequence, read N- to C-terminus: Tyrosine recombinase XerC (315 aa).

The 92-residue stretch at 13-104 (ADLAAAREEW…GVRSLLRHLE (92 aa)) folds into the Core-binding (CB) domain. The Tyr recombinase domain occupies 125–309 (SLPKPLTADD…DTQRLLEVYD (185 aa)). Catalysis depends on residues Arg-168, Lys-193, His-261, Arg-264, and His-287. Tyr-296 acts as the O-(3'-phospho-DNA)-tyrosine intermediate in catalysis.

Belongs to the 'phage' integrase family. XerC subfamily. As to quaternary structure, forms a cyclic heterotetrameric complex composed of two molecules of XerC and two molecules of XerD.

Its subcellular location is the cytoplasm. Functionally, site-specific tyrosine recombinase, which acts by catalyzing the cutting and rejoining of the recombining DNA molecules. The XerC-XerD complex is essential to convert dimers of the bacterial chromosome into monomers to permit their segregation at cell division. It also contributes to the segregational stability of plasmids. This Brucella suis biovar 1 (strain 1330) protein is Tyrosine recombinase XerC.